A 358-amino-acid polypeptide reads, in one-letter code: Arginine kinase (358 aa).

The region spanning 2–84 (SDADLFSKLD…LDEVIKDYHK (83 aa)) is the Phosphagen kinase N-terminal domain. Position 57–61 (57–61 (GVGIY)) interacts with substrate. Positions 112–350 (FIVSTRVRVG…EEILKREKEL (239 aa)) constitute a Phosphagen kinase C-terminal domain. Residues 115 to 119 (STRVR) and histidine 178 contribute to the ATP site. Glutamate 218 is a substrate binding site. An ATP-binding site is contributed by arginine 222. Residue cysteine 265 participates in substrate binding. ATP-binding positions include 274 to 278 (RASVH) and 303 to 308 (RGIHGE). Residue glutamate 308 participates in substrate binding.

It belongs to the ATP:guanido phosphotransferase family.

The enzyme catalyses L-arginine + ATP = N(omega)-phospho-L-arginine + ADP + H(+). The polypeptide is Arginine kinase (Turbo cornutus (Horned turban)).